A 68-amino-acid chain; its full sequence is MNDFVGPIVTVLTAIIGVAILAVLVSRNSNTAGVIKAGSGGFSSMLGTALSPVTGGTGFAMTNNYSGF.

The next 2 helical transmembrane spans lie at 4 to 24 (FVGP…LAVL) and 41 to 61 (GFSS…GFAM).

The protein localises to the virion membrane. This Acinetobacter calcoaceticus (Arthrobacter siderocapsulatus) protein is Protein P34 (XXXIV).